The chain runs to 1057 residues: Carbamoyl phosphate synthase large chain (1057 aa).

The carboxyphosphate synthetic domain stretch occupies residues 1-401 (MPKRNDIKTI…SLLKAIRSLE (401 aa)). 12 residues coordinate ATP: arginine 129, arginine 169, glycine 175, glycine 176, lysine 208, isoleucine 210, glutamate 215, glycine 241, isoleucine 242, histidine 243, glutamine 284, and glutamate 298. An ATP-grasp 1 domain is found at 133–327 (RTLMNDLNVP…IAKLAAKIAV (195 aa)). Mg(2+) contacts are provided by glutamine 284, glutamate 298, and asparagine 300. Residues glutamine 284, glutamate 298, and asparagine 300 each coordinate Mn(2+). The segment at 402-546 (YGVHHLGLPN…YGTYETENES (145 aa)) is oligomerization domain. The carbamoyl phosphate synthetic domain stretch occupies residues 547 to 929 (IVTDKEKILV…ALFKGLTGSG (383 aa)). The ATP-grasp 2 domain maps to 671-861 (EALLRKINVP…MAQLAMRAII (191 aa)). 10 residues coordinate ATP: arginine 707, arginine 746, leucine 748, glutamate 752, glycine 777, valine 778, histidine 779, serine 780, glutamine 820, and glutamate 832. Mg(2+)-binding residues include glutamine 820, glutamate 832, and asparagine 834. 3 residues coordinate Mn(2+): glutamine 820, glutamate 832, and asparagine 834. In terms of domain architecture, MGS-like spans 930-1057 (VEVKDHGTVL…ESMTFTMRQM (128 aa)). Residues 930–1057 (VEVKDHGTVL…ESMTFTMRQM (128 aa)) are allosteric domain.

Belongs to the CarB family. As to quaternary structure, composed of two chains; the small (or glutamine) chain promotes the hydrolysis of glutamine to ammonia, which is used by the large (or ammonia) chain to synthesize carbamoyl phosphate. Tetramer of heterodimers (alpha,beta)4. Mg(2+) serves as cofactor. Requires Mn(2+) as cofactor.

It catalyses the reaction hydrogencarbonate + L-glutamine + 2 ATP + H2O = carbamoyl phosphate + L-glutamate + 2 ADP + phosphate + 2 H(+). The enzyme catalyses hydrogencarbonate + NH4(+) + 2 ATP = carbamoyl phosphate + 2 ADP + phosphate + 2 H(+). It participates in amino-acid biosynthesis; L-arginine biosynthesis; carbamoyl phosphate from bicarbonate: step 1/1. The protein operates within pyrimidine metabolism; UMP biosynthesis via de novo pathway; (S)-dihydroorotate from bicarbonate: step 1/3. In terms of biological role, large subunit of the glutamine-dependent carbamoyl phosphate synthetase (CPSase). CPSase catalyzes the formation of carbamoyl phosphate from the ammonia moiety of glutamine, carbonate, and phosphate donated by ATP, constituting the first step of 2 biosynthetic pathways, one leading to arginine and/or urea and the other to pyrimidine nucleotides. The large subunit (synthetase) binds the substrates ammonia (free or transferred from glutamine from the small subunit), hydrogencarbonate and ATP and carries out an ATP-coupled ligase reaction, activating hydrogencarbonate by forming carboxy phosphate which reacts with ammonia to form carbamoyl phosphate. The sequence is that of Carbamoyl phosphate synthase large chain from Staphylococcus aureus (strain MW2).